A 142-amino-acid chain; its full sequence is Large ribosomal subunit protein uL13c (142 aa).

This sequence belongs to the universal ribosomal protein uL13 family. In terms of assembly, part of the 50S ribosomal subunit.

The protein localises to the plastid. It localises to the chloroplast. This is Large ribosomal subunit protein uL13c from Porphyra purpurea (Red seaweed).